The chain runs to 101 residues: Small ribosomal subunit protein uS14 (101 aa).

Belongs to the universal ribosomal protein uS14 family. In terms of assembly, part of the 30S ribosomal subunit. Contacts proteins S3 and S10.

In terms of biological role, binds 16S rRNA, required for the assembly of 30S particles and may also be responsible for determining the conformation of the 16S rRNA at the A site. This Cupriavidus pinatubonensis (strain JMP 134 / LMG 1197) (Cupriavidus necator (strain JMP 134)) protein is Small ribosomal subunit protein uS14.